We begin with the raw amino-acid sequence, 183 residues long: ATP synthase subunit delta (183 aa).

The protein belongs to the ATPase delta chain family. In terms of assembly, F-type ATPases have 2 components, F(1) - the catalytic core - and F(0) - the membrane proton channel. F(1) has five subunits: alpha(3), beta(3), gamma(1), delta(1), epsilon(1). F(0) has three main subunits: a(1), b(2) and c(10-14). The alpha and beta chains form an alternating ring which encloses part of the gamma chain. F(1) is attached to F(0) by a central stalk formed by the gamma and epsilon chains, while a peripheral stalk is formed by the delta and b chains.

It is found in the cell inner membrane. F(1)F(0) ATP synthase produces ATP from ADP in the presence of a proton or sodium gradient. F-type ATPases consist of two structural domains, F(1) containing the extramembraneous catalytic core and F(0) containing the membrane proton channel, linked together by a central stalk and a peripheral stalk. During catalysis, ATP synthesis in the catalytic domain of F(1) is coupled via a rotary mechanism of the central stalk subunits to proton translocation. Functionally, this protein is part of the stalk that links CF(0) to CF(1). It either transmits conformational changes from CF(0) to CF(1) or is implicated in proton conduction. The chain is ATP synthase subunit delta from Thermosipho africanus (strain TCF52B).